Here is a 548-residue protein sequence, read N- to C-terminus: Elongator complex protein 3 (548 aa).

Residues Arg-83–Pro-373 form the Radical SAM core domain. Cys-100, Cys-110, and Cys-113 together coordinate [4Fe-4S] cluster. Residues Lys-165, Glu-475 to Val-478, Phe-498 to Met-500, and Tyr-531 contribute to the acetyl-CoA site. Positions Thr-397 to Tyr-548 constitute an N-acetyltransferase domain.

It belongs to the ELP3 family. Component of the elongator complex. The cofactor is [4Fe-4S] cluster.

It is found in the cytoplasm. The protein localises to the nucleus. It catalyses the reaction uridine(34) in tRNA + acetyl-CoA + S-adenosyl-L-methionine + H2O = 5-(carboxymethyl)uridine(34) in tRNA + 5'-deoxyadenosine + L-methionine + CoA + 2 H(+). Its pathway is tRNA modification; 5-methoxycarbonylmethyl-2-thiouridine-tRNA biosynthesis. Its function is as follows. Catalytic tRNA acetyltransferase subunit of the elongator complex which is required for multiple tRNA modifications, including mcm5U (5-methoxycarbonylmethyl uridine), mcm5s2U (5-methoxycarbonylmethyl-2-thiouridine), and ncm5U (5-carbamoylmethyl uridine). In the elongator complex, acts as a tRNA uridine(34) acetyltransferase by mediating formation of carboxymethyluridine in the wobble base at position 34 in tRNAs. Involved in neurogenesis. Involved in somite development. This is Elongator complex protein 3 from Danio rerio (Zebrafish).